The chain runs to 184 residues: MTVEVGADENPDFAHDETDGAGDESDDEDAQGRDPELDLAVQYGDEIGDAQRKSLPKRKVIAEWLEPAIFSDTQFTVRFVGADEGRALNHSYRHKDYATNVLTFAYGEEPDGVTVADLVLCCPVVEKEAREQGKTLVAHYAHLLVHGALHAQGYDHERGEEDAAEMEALEIDILAKLGFPNPYR.

Composition is skewed to acidic residues over residues 1–11 and 19–29; these read MTVEVGADENP and DGAGDESDDED. Positions 1-37 are disordered; the sequence is MTVEVGADENPDFAHDETDGAGDESDDEDAQGRDPEL. Positions 146, 150, and 156 each coordinate Zn(2+).

This sequence belongs to the endoribonuclease YbeY family. It depends on Zn(2+) as a cofactor.

Its subcellular location is the cytoplasm. Functionally, single strand-specific metallo-endoribonuclease involved in late-stage 70S ribosome quality control and in maturation of the 3' terminus of the 16S rRNA. The chain is Endoribonuclease YbeY from Burkholderia mallei (strain ATCC 23344).